The chain runs to 366 residues: MEPRESGKQRVAVLFGGQSTEHEVSLRSSMNVIRAIDRQKYDLTLIGVDKHGRWTLCDEQDYLLNADNPAAIRLAPARCYLAVVPGQSGAQLIDAANGQPFPSIDVAFSVLHGASGEDGSVQGLLRVLNIPYAGPDVLGSAVCMDKDMTKRVLRDAGVPVTPSVTLLRTGDAAPDVDAIIGQLGLPLFIKPASQGSSVGVSKVTDRAGFAAALALAFRYDAKVLVEQGISGREIETAVLGNDSPEVSVCGEILANDEFYAYDTKYLKGAQAGLVIPAALPAPIADALRQMAREAYLALGCSVMARVDFFLTDQGQILLNEVNTLPGFTSISMYPKLWEASGLDYPALVDRLIVLARASARQNAEIR.

In terms of domain architecture, ATP-grasp spans 150-353 (KRVLRDAGVP…YPALVDRLIV (204 aa)). 180–235 (IGQLGLPLFIKPASQGSSVGVSKVTDRAGFAAALALAFRYDAKVLVEQGISGREIE) lines the ATP pocket. Positions 307, 320, and 322 each coordinate Mg(2+).

Belongs to the D-alanine--D-alanine ligase family. It depends on Mg(2+) as a cofactor. Mn(2+) serves as cofactor.

The protein localises to the cytoplasm. The catalysed reaction is 2 D-alanine + ATP = D-alanyl-D-alanine + ADP + phosphate + H(+). It functions in the pathway cell wall biogenesis; peptidoglycan biosynthesis. Its function is as follows. Cell wall formation. This is D-alanine--D-alanine ligase from Sodalis glossinidius (strain morsitans).